A 100-amino-acid chain; its full sequence is Urease subunit gamma (100 aa).

The protein belongs to the urease gamma subunit family. Heterotrimer of UreA (gamma), UreB (beta) and UreC (alpha) subunits. Three heterotrimers associate to form the active enzyme.

It is found in the cytoplasm. The catalysed reaction is urea + 2 H2O + H(+) = hydrogencarbonate + 2 NH4(+). It participates in nitrogen metabolism; urea degradation; CO(2) and NH(3) from urea (urease route): step 1/1. The protein is Urease subunit gamma of Streptomyces coelicolor (strain ATCC BAA-471 / A3(2) / M145).